Here is a 305-residue protein sequence, read N- to C-terminus: MSKRVTVLMGGASAERDVSLRSGAAAAKALEQAGFEVALVDCDRNPAELVRAITETRPDVVFNALHGRFGEDGCVQGVLNLLGVPYTHSGLLASAAAMDKAFARALFASAGIPVAEGRVITRTDRNGPDPLPRPFVVKPLNEGSSVGVFIVRDNQPSPLPDWPFDADEVLVESFIPGRELTAAVMGDRALGVLEITSDHGFYDYEAKYAPGGSRHLMPAPIPEADYAEACRLAVAAHKALGCRGVSRADLRYDDTVPGQPPRLVMLEVNTQPGMTATSLVPEMAAYQGITFPELVRWMVEEARCD.

Positions 104–300 (RALFASAGIP…FPELVRWMVE (197 aa)) constitute an ATP-grasp domain. 131–181 (LPRPFVVKPLNEGSSVGVFIVRDNQPSPLPDWPFDADEVLVESFIPGRELT) provides a ligand contact to ATP. Residues Asp-249, Glu-267, and Asn-269 each contribute to the Mg(2+) site.

It belongs to the D-alanine--D-alanine ligase family. Mg(2+) is required as a cofactor. Requires Mn(2+) as cofactor.

The protein localises to the cytoplasm. The enzyme catalyses 2 D-alanine + ATP = D-alanyl-D-alanine + ADP + phosphate + H(+). It functions in the pathway cell wall biogenesis; peptidoglycan biosynthesis. Cell wall formation. This is D-alanine--D-alanine ligase from Paramagnetospirillum magneticum (strain ATCC 700264 / AMB-1) (Magnetospirillum magneticum).